The sequence spans 352 residues: Lipopolysaccharide core biosynthesis mannosyltransferase LpcC (352 aa).

Belongs to the glycosyltransferase group 1 family. Glycosyltransferase 4 subfamily.

Its pathway is bacterial outer membrane biogenesis; LPS core biosynthesis. Functionally, acts at transfer of mannose group to a 3-deoxy-D-mono octulonic acid (KDO) via an alpha-1,5 linkage. In Rhizobium leguminosarum bv. viciae, this protein is Lipopolysaccharide core biosynthesis mannosyltransferase LpcC (lpcC).